A 424-amino-acid polypeptide reads, in one-letter code: 26S proteasome regulatory subunit 6A homolog A (424 aa).

The interval 1 to 21 (MATPMVEDTSSFEEDQLASMS) is disordered. Ala2 is subject to N-acetylalanine. Ser19 is modified (phosphoserine). Residue 212 to 219 (GPPGTGKT) participates in ATP binding. Lys235 participates in a covalent cross-link: Glycyl lysine isopeptide (Lys-Gly) (interchain with G-Cter in ubiquitin). Thr278 is modified (O-acetylthreonine). Glycyl lysine isopeptide (Lys-Gly) (interchain with G-Cter in ubiquitin) cross-links involve residues Lys279 and Lys416.

It belongs to the AAA ATPase family. In terms of assembly, component of the 19S regulatory particle (RP/PA700) base subcomplex of the 26S proteasome. The 26S proteasome is composed of a core protease (CP), known as the 20S proteasome, capped at one or both ends by the 19S regulatory particle (RP/PA700). The RP/PA700 complex is composed of at least 17 different subunits in two subcomplexes, the base and the lid, which form the portions proximal and distal to the 20S proteolytic core, respectively. In terms of tissue distribution, ubiquitous.

The protein localises to the cytoplasm. It localises to the nucleus. Functionally, the 26S proteasome is involved in the ATP-dependent degradation of ubiquitinated proteins. The regulatory (or ATPase) complex confers ATP dependency and substrate specificity to the 26S complex. Interacts with transit peptides of proteins targeted to the chloroplast, and may be involved in the degradation of unimported plastid protein precursors. Plays a essential role in the gametophyte development. Involved in tolerance to zinc deficiency, possibly through alleviation of oxidative stresses or processing of poly-ubiquitinated proteins. The polypeptide is 26S proteasome regulatory subunit 6A homolog A (Arabidopsis thaliana (Mouse-ear cress)).